A 273-amino-acid chain; its full sequence is ATP synthase subunit a (273 aa).

The next 5 helical transmembrane spans lie at 44 to 64 (WHID…WLFY), 104 to 124 (IAPL…MDLI), 149 to 169 (DLNV…FYSI), 223 to 243 (LIFI…SVPW), and 244 to 264 (AIFH…LTIV).

It belongs to the ATPase A chain family. In terms of assembly, F-type ATPases have 2 components, CF(1) - the catalytic core - and CF(0) - the membrane proton channel. CF(1) has five subunits: alpha(3), beta(3), gamma(1), delta(1), epsilon(1). CF(0) has three main subunits: a(1), b(2) and c(9-12). The alpha and beta chains form an alternating ring which encloses part of the gamma chain. CF(1) is attached to CF(0) by a central stalk formed by the gamma and epsilon chains, while a peripheral stalk is formed by the delta and b chains.

The protein resides in the cell inner membrane. Its function is as follows. Key component of the proton channel; it plays a direct role in the translocation of protons across the membrane. The polypeptide is ATP synthase subunit a (Shewanella putrefaciens (strain CN-32 / ATCC BAA-453)).